The following is a 355-amino-acid chain: Peptide chain release factor 1 (355 aa).

N5-methylglutamine is present on Q233. The segment covering 280–293 has biased composition (basic and acidic residues); sequence ERRKKEQERADSRR. Residues 280–308 are disordered; sequence ERRKKEQERADSRRGQVGSGDRSERIRTY.

The protein belongs to the prokaryotic/mitochondrial release factor family. Post-translationally, methylated by PrmC. Methylation increases the termination efficiency of RF1.

It localises to the cytoplasm. Peptide chain release factor 1 directs the termination of translation in response to the peptide chain termination codons UAG and UAA. The protein is Peptide chain release factor 1 of Rickettsia peacockii (strain Rustic).